Here is a 381-residue protein sequence, read N- to C-terminus: MRVVQVANFYGPRSGGLRTAVDRLGAEYCASGHEVFLIVPGARTERHLLRTGVVRITLPAKHIPYTGGYRAVMPGAVRTVLETLRPDALEVSDRLTLRSLGRWGREHGVTTVMISHERLDRFAGQLLPRRAAQKFADFANARTAANYDTVVCTTGFAREEFDRIGATNTVTVPLGVDLKTFHPRRRCARVRQHWATPTQILLVHCGRLSVEKHADRSIDALAALCDAGVDARLVIAGEGPLRARLERKATGLPIDFTGFISDRHAVAGLLASADVALAPGPHETFGLAALESLACGTPAVVSRTSALTEIITADSGACADNRPEAIAHAVRTIVSRPERHRRRCARRRAEIFTWQRAAASMLATLGAMAVSTRCGDTQDTA.

Substrate-binding positions include Gly16, Arg207, 211-212 (EK), 283-287 (ETFGL), and Glu291.

This sequence belongs to the glycosyltransferase group 1 family. Glycosyltransferase 4 subfamily.

The protein operates within phospholipid metabolism; phosphatidylinositol metabolism. Catalyzes the addition of a mannose residue from GDP-D-mannose to the position 6 of the alpha-1,6-linked mannose residue of the triacyl phosphatidylinositol dimannoside (Ac3PIM2) to generate triacyl phosphatidylinositol trimannoside (Ac3PIM3). The polypeptide is GDP-mannose-dependent alpha-(1-6)-phosphatidylinositol dimannoside mannosyltransferase (pimC) (Mycobacterium tuberculosis (strain ATCC 25177 / H37Ra)).